The sequence spans 552 residues: CTP synthase (552 aa).

Residues 1-270 (MTKFVFVTGG…DGLICDKLRL (270 aa)) are amidoligase domain. Position 13 (Ser-13) interacts with CTP. UTP is bound at residue Ser-13. ATP is bound by residues 14–19 (SLGKGI) and Asp-71. Residues Asp-71 and Glu-144 each coordinate Mg(2+). Residues 151 to 153 (DIE), 191 to 196 (KTKPTQ), and Lys-227 contribute to the CTP site. UTP is bound by residues 191-196 (KTKPTQ) and Lys-227. A Glutamine amidotransferase type-1 domain is found at 295-548 (QIAMVGKYVE…IKAAVEHQKP (254 aa)). Gly-357 contributes to the L-glutamine binding site. Catalysis depends on Cys-384, which acts as the Nucleophile; for glutamine hydrolysis. Residues 385-388 (LGMQ), Glu-408, and Arg-474 each bind L-glutamine. Residues His-521 and Glu-523 contribute to the active site.

Belongs to the CTP synthase family. In terms of assembly, homotetramer.

The enzyme catalyses UTP + L-glutamine + ATP + H2O = CTP + L-glutamate + ADP + phosphate + 2 H(+). The catalysed reaction is L-glutamine + H2O = L-glutamate + NH4(+). It catalyses the reaction UTP + NH4(+) + ATP = CTP + ADP + phosphate + 2 H(+). The protein operates within pyrimidine metabolism; CTP biosynthesis via de novo pathway; CTP from UDP: step 2/2. Allosterically activated by GTP, when glutamine is the substrate; GTP has no effect on the reaction when ammonia is the substrate. The allosteric effector GTP functions by stabilizing the protein conformation that binds the tetrahedral intermediate(s) formed during glutamine hydrolysis. Inhibited by the product CTP, via allosteric rather than competitive inhibition. Functionally, catalyzes the ATP-dependent amination of UTP to CTP with either L-glutamine or ammonia as the source of nitrogen. Regulates intracellular CTP levels through interactions with the four ribonucleotide triphosphates. The sequence is that of CTP synthase from Acidovorax ebreus (strain TPSY) (Diaphorobacter sp. (strain TPSY)).